Reading from the N-terminus, the 470-residue chain is MSEDYRTEQDSLGEMQVPADAYWGAQTQRAIENFPISGIAFGRRFVRALGVVKKAAAQANRDLGLVDDERADAIVAAADEVIAGEHDDQFPVDVFQTGSGTSSNMNANEVIANRAAELLGEEIGDRVVHPNDHVNYGQSSNDVIPTAMHVASLDALVNDVKPGLETLAAELDDKADAFDGVVKTGRTHLQDATPVRLGQEFGGYRTQVEKGIDRIEAVAPRLSELALGGTAVGTGLNTHPEFPETAAGYISEETGVTFREADNHFEAQAAHDAMNEAHGALRTVAGSLNKIANDLRLLASGPRNGLGEIEQPENQPGSSIMPGKINPVVAEAVNQVHKQVVGNDAAIAAGAAEGQIDLNLYKPVLAHNFLQSADMLANASAAFGEKFVAKLEANEAACEAQVERSMALATALNPTIGYDKASEVAKAALKEGKTVTEVVVEKGYLSEAEAADVLDPEGMTHRGILSGDDT.

Residues 99 to 101, 129 to 132, 139 to 141, and T187 contribute to the substrate site; these read SGT, HPND, and SSN. H188 serves as the catalytic Proton donor/acceptor. Residue S318 is part of the active site. Substrate is bound by residues S319 and 324-326; that span reads KIN.

It belongs to the class-II fumarase/aspartase family. Fumarase subfamily. Homotetramer.

Its subcellular location is the cytoplasm. It carries out the reaction (S)-malate = fumarate + H2O. The protein operates within carbohydrate metabolism; tricarboxylic acid cycle; (S)-malate from fumarate: step 1/1. In terms of biological role, involved in the TCA cycle. Catalyzes the stereospecific interconversion of fumarate to L-malate. This is Fumarate hydratase class II from Halobacterium salinarum (strain ATCC 700922 / JCM 11081 / NRC-1) (Halobacterium halobium).